Here is a 534-residue protein sequence, read N- to C-terminus: 5'-nucleotidase domain-containing protein 3 (534 aa).

Asp-104 (nucleophile) is an active-site residue. Mg(2+)-binding residues include Asp-104 and Asp-106. Residue Asp-106 is the Proton donor of the active site. 234 to 242 (KEAIRDVHV) contributes to the substrate binding site. Residue Asp-372 coordinates Mg(2+).

This sequence belongs to the 5'(3')-deoxyribonucleotidase family. It depends on Mg(2+) as a cofactor.

The sequence is that of 5'-nucleotidase domain-containing protein 3 (nt5dc3) from Xenopus tropicalis (Western clawed frog).